The sequence spans 619 residues: Telomere repeat-binding protein 3 (619 aa).

Positions valine 324–proline 403 constitute a Ubiquitin-like domain. The 60-residue stretch at alanine 504–serine 563 folds into the HTH myb-type domain. The H-T-H motif DNA-binding region spans tryptophan 532–valine 559. Residues glutamine 593 to valine 619 are disordered.

In terms of assembly, homodimer and heterodimer with TRP1. In terms of tissue distribution, expressed ubiquitously. Highest expression in flowers and roots.

It localises to the nucleus. Functionally, binds specifically to the plant telomeric double-stranded DNA sequences. At least 2 repeats of telomeric sequences are required for binding. Induces DNA bending. The chain is Telomere repeat-binding protein 3 (TRP3) from Arabidopsis thaliana (Mouse-ear cress).